Reading from the N-terminus, the 131-residue chain is Large ribosomal subunit protein bL17 (131 aa).

Belongs to the bacterial ribosomal protein bL17 family. As to quaternary structure, part of the 50S ribosomal subunit. Contacts protein L32.

The chain is Large ribosomal subunit protein bL17 from Shewanella frigidimarina (strain NCIMB 400).